Consider the following 255-residue polypeptide: Indole-3-glycerol phosphate synthase (255 aa).

The protein belongs to the TrpC family.

It catalyses the reaction 1-(2-carboxyphenylamino)-1-deoxy-D-ribulose 5-phosphate + H(+) = (1S,2R)-1-C-(indol-3-yl)glycerol 3-phosphate + CO2 + H2O. Its pathway is amino-acid biosynthesis; L-tryptophan biosynthesis; L-tryptophan from chorismate: step 4/5. The sequence is that of Indole-3-glycerol phosphate synthase from Streptococcus sanguinis (strain SK36).